We begin with the raw amino-acid sequence, 630 residues long: Putative polypeptide N-acetylgalactosaminyltransferase 10 (630 aa).

The Cytoplasmic portion of the chain corresponds to 1-6; it reads MNVDLR. The helical; Signal-anchor for type II membrane protein transmembrane segment at 7 to 26 threads the bilayer; it reads LIVRLLLAILLTSLVTTILM. Residues 27–630 are Lumenal-facing; it reads GKQIHRRLVK…APYDPQREPH (604 aa). N-linked (GlcNAc...) asparagine glycosylation is found at Asn72, Asn84, Asn146, and Asn168. Intrachain disulfides connect Cys157/Cys386, Cys377/Cys456, and Cys496/Cys513. The tract at residues 166-277 is catalytic subdomain A; that stretch reads LPNVTVIIAF…TNWLPPLLEP (112 aa). The substrate site is built by Asp207 and Arg238. Asp261 serves as a coordination point for Mn(2+). Position 262 (Ser262) interacts with substrate. His263 is a binding site for Mn(2+). The tract at residues 333–394 is catalytic subdomain B; that stretch reads PYRTPVLSGA…PCARVGHIGK (62 aa). Position 363 (Trp363) interacts with substrate. His391 is a binding site for Mn(2+). One can recognise a Ricin B-type lectin domain in the interval 483 to 618; it reads FSGVIESVAF…NQLEQQWKVG (136 aa). Asn525 carries an N-linked (GlcNAc...) asparagine glycan. Disulfide bonds link Cys543-Cys559 and Cys586-Cys606.

The protein belongs to the glycosyltransferase 2 family. GalNAc-T subfamily. Mn(2+) serves as cofactor. During embryonic stages 9-11, weakly expressed in the mesoderm. During embryonic stages 12-13, very weak expression is observed in the somatic mesoderm region. No expression detected from stage 14-15. During embryonic stages 16-17, expressed in the epidermis and the antennomaxillary complex. In third instar larvae, expressed ubiquitously in wing, eye-antennal, leg and haltere imaginal disks.

The protein resides in the golgi apparatus membrane. The catalysed reaction is L-seryl-[protein] + UDP-N-acetyl-alpha-D-galactosamine = a 3-O-[N-acetyl-alpha-D-galactosaminyl]-L-seryl-[protein] + UDP + H(+). The enzyme catalyses L-threonyl-[protein] + UDP-N-acetyl-alpha-D-galactosamine = a 3-O-[N-acetyl-alpha-D-galactosaminyl]-L-threonyl-[protein] + UDP + H(+). It functions in the pathway protein modification; protein glycosylation. Functionally, may catalyze the initial reaction in O-linked oligosaccharide biosynthesis, the transfer of an N-acetyl-D-galactosamine residue to a serine or threonine residue on the protein receptor. The sequence is that of Putative polypeptide N-acetylgalactosaminyltransferase 10 (pgant10) from Drosophila melanogaster (Fruit fly).